Reading from the N-terminus, the 76-residue chain is Sulfur carrier protein TusA (76 aa).

Catalysis depends on C15, which acts as the Cysteine persulfide intermediate.

It belongs to the sulfur carrier protein TusA family. Mostly a monomer, a small portion forms homodimer via intermolecular disulfide bonds. Tightly interacts with DsrEFH.

Its subcellular location is the cytoplasm. Its pathway is energy metabolism; sulfur metabolism. In terms of biological role, sulfur carrier protein involved in sulfur trafficking for oxidative dissimilatory sulfur metabolism. Component of a sulfur relay system that starts with the sulfur-mobilizing rhodanese-like protein Rhd_2599 (Alvin_2599), which transfers the sulfur from a low-molecular-weight thiol, maybe glutathione, to the TusA protein (Alvin_2600); TusA serves as the sulfur donor for DsrEFH, which persulfurates DsrC; persulfurated DsrC very probably serves as a direct substrate for reverse-acting sulfite reductase, DsrAB. TusA seems to be not exclusively dedicated to sulfur oxidation and may have other important roles in the cell. Might also act as a sulfur mediator required for 2-thiouridine formation of tRNA. The chain is Sulfur carrier protein TusA from Allochromatium vinosum (strain ATCC 17899 / DSM 180 / NBRC 103801 / NCIMB 10441 / D) (Chromatium vinosum).